A 44-amino-acid chain; its full sequence is Defensin-like protein 1 (44 aa).

Pyrrolidone carboxylic acid is present on Gln-1. Cys-15 and Cys-36 form a disulfide bridge.

This sequence belongs to the DEFL family. In terms of assembly, forms oligomers in its native state.

Its subcellular location is the secreted. Functionally, possesses antifungal activity sensitive to inorganic cations. This is Defensin-like protein 1 (AFP1) from Brassica napus (Rape).